A 2813-amino-acid polypeptide reads, in one-letter code: von Willebrand factor (2813 aa).

An N-terminal signal peptide occupies residues 1 to 22 (MIPARFAGVLLALALILPGTLC). In terms of domain architecture, VWFD 1 spans 33–201 (ARCSLFGSDF…ALSSGEQWCE (169 aa)). 2 disulfides stabilise this stretch: C35/C162 and C57/C200. N-linked (GlcNAc...) asparagine glycans are attached at residues N99, N156, and N211. A TIL 1 domain is found at 295–348 (CPAGMEYRQCVSPCARTCQSLHINEMCQERCVDGCSCPEGQLLDEGLCVESTEC). Positions 386–560 (GECLVTGQSH…NAWKLHGDCQ (175 aa)) constitute a VWFD 2 domain. 3 disulfide bridges follow: C388–C524, C410–C559, and C432–C440. TIL domains follow at residues 652–707 (CPKG…KAQC) and 776–827 (CPAD…LERC). N666 carries N-linked (GlcNAc...) asparagine glycosylation. Residues 764 to 787 (SLSCRPPMVKLVCPADNLRAEGLE) are amino-terminal. 3 disulfides stabilise this stretch: C767–C808, C776–C804, and C810–C821. Positions 788–833 (CTKTCQNYDLECMSMGCVSGCLCPPGMVRHENRCVALERCPCFHQG) are E1. Residues 826-853 (RCPCFHQGKEYAPGETVKIGCNTCVCQD) are CX. N-linked (GlcNAc...) asparagine glycosylation occurs at N857. Residues 865-1032 (ATCSTIGMAH…NSWKVSSQCA (168 aa)) enclose the VWFD 3 domain. 8 cysteine pairs are disulfide-bonded: C867-C996, C889-C1031, C898-C993, C914-C921, C1060-C1084, C1071-C1111, C1089-C1091, and C1126-C1130. The 51-residue stretch at 1146–1196 (YNSCAPACQVTCQHPEPLACPVQCVEGCHAHCPPGKILDELLQTCVDPEDC) folds into the TIL 4 domain. An N-linked (GlcNAc...) asparagine; atypical glycan is attached at N1147. Disulfide bonds link C1149–C1169, C1153–C1165, and C1196–C1199. N1231 carries N-linked (GlcNAc...) asparagine glycosylation. Cysteines 1234 and 1237 form a disulfide. 3 O-linked (GalNAc...) threonine glycosylation sites follow: T1248, T1255, and T1256. An O-linked (GalNAc...) serine glycan is attached at S1263. C1272 and C1458 form a disulfide bridge. One can recognise a VWFA 1; binding site for platelet glycoprotein Ib domain in the interval 1277–1453 (DLVFLLDGSS…DELEQQRDEI (177 aa)). T1468 and T1477 each carry an O-linked (GalNAc...) threonine glycan. S1486 is a glycosylation site (O-linked (GalNAc...) serine). T1487 is a glycosylation site (O-linked (GalNAc...) threonine). A VWFA 2 domain is found at 1498–1665 (DVAFVLEGSD…TLPREAPDLV (168 aa)). A glycan (N-linked (GlcNAc...) (complex) asparagine) is linked at N1515. N-linked (GlcNAc...) asparagine glycosylation is present at N1574. A disulfide bridge links C1669 with C1670. T1679 carries O-linked (GalNAc...) threonine glycosylation. Intrachain disulfides connect C1686–C1872, C1879–C1904, C1899–C1940, C1927–C2088, C1950–C2085, C1972–C2123, and C1993–C2001. One can recognise a VWFA 3; main binding site for collagens type I and III domain in the interval 1691 to 1871 (DVILLLDGSS…TLGNSFLHKL (181 aa)). The VWFD 4 domain occupies 1948–2124 (CVCTGSSTRH…TVQRPGQTCQ (177 aa)). Residues 2216–2261 (CPRHCDGNVSSCGDHPSEGCFCPPDKVMLEGSCVPEEACTQCIGED) form an E2 region. N-linked (GlcNAc...) asparagine glycosylation is found at N2223 and N2290. A VWFC 1 domain is found at 2255–2328 (TQCIGEDGVQ…CCPEYECVCD (74 aa)). T2298 is a glycosylation site (O-linked (GalNAc...) threonine). Residues N2357 and N2400 are each glycosylated (N-linked (GlcNAc...) asparagine). The VWFC 2 domain maps to 2429–2495 (KVCVHRSTIY…HEGECCGRCL (67 aa)). The Cell attachment site signature appears at 2507–2509 (RGD). Residues N2546 and N2585 are each glycosylated (N-linked (GlcNAc...) asparagine). In terms of domain architecture, VWFC 3 spans 2580-2645 (EACMLNGTVI…NTGECCGRCL (66 aa)). Intrachain disulfides connect C2724–C2774, C2739–C2788, C2750–C2804, and C2754–C2806. The region spanning 2724–2812 (CNDITARLQY…ECKCSPRKCS (89 aa)) is the CTCK domain. Residue N2790 is glycosylated (N-linked (GlcNAc...) asparagine).

Multimeric. Interacts with F8. In terms of processing, all cysteine residues are involved in intrachain or interchain disulfide bonds. N- and O-glycosylated. Plasma.

The protein localises to the secreted. The protein resides in the extracellular space. Its subcellular location is the extracellular matrix. Its function is as follows. Important in the maintenance of hemostasis, it promotes adhesion of platelets to the sites of vascular injury by forming a molecular bridge between sub-endothelial collagen matrix and platelet-surface receptor complex GPIb-IX-V. Also acts as a chaperone for coagulation factor VIII, delivering it to the site of injury, stabilizing its heterodimeric structure and protecting it from premature clearance from plasma. This is von Willebrand factor (VWF) from Homo sapiens (Human).